A 151-amino-acid chain; its full sequence is Transcription antitermination protein NusB (151 aa).

Belongs to the NusB family.

Functionally, involved in transcription antitermination. Required for transcription of ribosomal RNA (rRNA) genes. Binds specifically to the boxA antiterminator sequence of the ribosomal RNA (rrn) operons. The chain is Transcription antitermination protein NusB from Photobacterium profundum (strain SS9).